Reading from the N-terminus, the 94-residue chain is Ribonuclease P protein component 1 (94 aa).

It belongs to the eukaryotic/archaeal RNase P protein component 1 family. Consists of a catalytic RNA component and at least 4-5 protein subunits.

It is found in the cytoplasm. The catalysed reaction is Endonucleolytic cleavage of RNA, removing 5'-extranucleotides from tRNA precursor.. In terms of biological role, part of ribonuclease P, a protein complex that generates mature tRNA molecules by cleaving their 5'-ends. This is Ribonuclease P protein component 1 from Haloarcula marismortui (strain ATCC 43049 / DSM 3752 / JCM 8966 / VKM B-1809) (Halobacterium marismortui).